A 361-amino-acid chain; its full sequence is Peptide chain release factor 1 (361 aa).

N5-methylglutamine is present on Gln-235.

Belongs to the prokaryotic/mitochondrial release factor family. Post-translationally, methylated by PrmC. Methylation increases the termination efficiency of RF1.

Its subcellular location is the cytoplasm. Peptide chain release factor 1 directs the termination of translation in response to the peptide chain termination codons UAG and UAA. This chain is Peptide chain release factor 1, found in Xanthomonas euvesicatoria pv. vesicatoria (strain 85-10) (Xanthomonas campestris pv. vesicatoria).